We begin with the raw amino-acid sequence, 195 residues long: ATP-dependent Clp protease proteolytic subunit (195 aa).

Residue Ser-99 is the Nucleophile of the active site. Residue His-124 is part of the active site.

It belongs to the peptidase S14 family. As to quaternary structure, fourteen ClpP subunits assemble into 2 heptameric rings which stack back to back to give a disk-like structure with a central cavity, resembling the structure of eukaryotic proteasomes.

It is found in the cytoplasm. The catalysed reaction is Hydrolysis of proteins to small peptides in the presence of ATP and magnesium. alpha-casein is the usual test substrate. In the absence of ATP, only oligopeptides shorter than five residues are hydrolyzed (such as succinyl-Leu-Tyr-|-NHMec, and Leu-Tyr-Leu-|-Tyr-Trp, in which cleavage of the -Tyr-|-Leu- and -Tyr-|-Trp bonds also occurs).. Cleaves peptides in various proteins in a process that requires ATP hydrolysis. Has a chymotrypsin-like activity. Plays a major role in the degradation of misfolded proteins. The sequence is that of ATP-dependent Clp protease proteolytic subunit from Coxiella burnetii (strain CbuG_Q212) (Coxiella burnetii (strain Q212)).